A 402-amino-acid polypeptide reads, in one-letter code: Secreted RxLR effector protein 73 (402 aa).

An N-terminal signal peptide occupies residues 1–23 (MRLLHVVVATVSLTGAITSLIAA). N-linked (GlcNAc...) asparagine glycosylation is present at Asn-27. The short motif at 104 to 107 (RVLR) is the RxLR element. N-linked (GlcNAc...) asparagine glycosylation is found at Asn-111, Asn-134, Asn-143, Asn-165, and Asn-286.

The protein belongs to the RxLR effector family.

Its subcellular location is the secreted. The protein localises to the host cell. In terms of biological role, secreted effector that completely suppresses the host cell death induced by cell death-inducing proteins. The protein is Secreted RxLR effector protein 73 of Plasmopara viticola (Downy mildew of grapevine).